Here is a 282-residue protein sequence, read N- to C-terminus: BURP domain-containing protein BNM2A (282 aa).

The N-terminal stretch at methionine 1 to alanine 26 is a signal peptide. The BURP domain occupies phenylalanine 60 to lysine 282.

As to expression, expressed in the radicle and cotyledon of germinating seeds 2 days post-imbibition (DPI), in stems and roots of 30-DPI young plants and in floral buds, but not in fully open flowers or leaves. Expressed in the embryo and seed coat tissues of developing seeds. The protein accumulates only in seeds and only long after transcript accumulation becomes evident.

It is found in the protein storage vacuole. This is BURP domain-containing protein BNM2A from Brassica napus (Rape).